A 367-amino-acid polypeptide reads, in one-letter code: Probable trehalose-phosphate phosphatase 4 (367 aa).

It belongs to the trehalose phosphatase family. A divalent metal cation is required as a cofactor.

The catalysed reaction is alpha,alpha-trehalose 6-phosphate + H2O = alpha,alpha-trehalose + phosphate. Its pathway is glycan biosynthesis; trehalose biosynthesis. Removes the phosphate from trehalose 6-phosphate to produce free trehalose. Trehalose accumulation in plant may improve abiotic stress tolerance. This is Probable trehalose-phosphate phosphatase 4 (TPP4) from Oryza sativa subsp. japonica (Rice).